Reading from the N-terminus, the 848-residue chain is Trimethylamine-N-oxide reductase 1 (848 aa).

The tat-type signal signal peptide spans 1–39 (MNNNDLFQASRRRFLAQLGGLTVAGMLGPSLLTPRRATA). Ser191 is a Mo-bis(molybdopterin guanine dinucleotide) binding site.

The protein belongs to the prokaryotic molybdopterin-containing oxidoreductase family. As to quaternary structure, interacts with the N-terminal domain of TorC. It depends on Mo-bis(molybdopterin guanine dinucleotide) as a cofactor. Post-translationally, exported by the Tat system. The position of the signal peptide cleavage has been experimentally proven.

The protein resides in the periplasm. It carries out the reaction trimethylamine + 2 Fe(III)-[cytochrome c] + H2O = trimethylamine N-oxide + 2 Fe(II)-[cytochrome c] + 3 H(+). Reduces trimethylamine-N-oxide (TMAO) into trimethylamine; an anaerobic reaction coupled to energy-yielding reactions. The sequence is that of Trimethylamine-N-oxide reductase 1 (torA) from Escherichia coli (strain K12).